Consider the following 873-residue polypeptide: Alanine--tRNA ligase (873 aa).

The Zn(2+) site is built by His-562, His-566, Cys-666, and His-670.

It belongs to the class-II aminoacyl-tRNA synthetase family. Zn(2+) is required as a cofactor.

Its subcellular location is the cytoplasm. It catalyses the reaction tRNA(Ala) + L-alanine + ATP = L-alanyl-tRNA(Ala) + AMP + diphosphate. Catalyzes the attachment of alanine to tRNA(Ala) in a two-step reaction: alanine is first activated by ATP to form Ala-AMP and then transferred to the acceptor end of tRNA(Ala). Also edits incorrectly charged Ser-tRNA(Ala) and Gly-tRNA(Ala) via its editing domain. The protein is Alanine--tRNA ligase of Dichelobacter nodosus (strain VCS1703A).